The sequence spans 149 residues: Endoribonuclease YbeY (149 aa).

Residues His-101, His-105, and His-111 each coordinate Zn(2+).

This sequence belongs to the endoribonuclease YbeY family. Requires Zn(2+) as cofactor.

Its subcellular location is the cytoplasm. Functionally, single strand-specific metallo-endoribonuclease involved in late-stage 70S ribosome quality control and in maturation of the 3' terminus of the 16S rRNA. The protein is Endoribonuclease YbeY of Thermotoga neapolitana (strain ATCC 49049 / DSM 4359 / NBRC 107923 / NS-E).